Here is a 324-residue protein sequence, read N- to C-terminus: MTYSKISQAAHHLPEQVISNDDLSLILETNDQWISSRTGIKERRISRSENTSDLASRVAEKLLEKANIDATEIDFIIVATITGDSIMPSVAAKVQGTIGATHAFAFDMTAACSGFVFALAMADKLIRSASYQKGLVIGAEVLSKYLDWEDRSTAVLFGDGAGGVLVEACSEQHFMAESLHTDGSRGQNLTSGNNPLRSPFSDSEEASPFIKMDGRAIFDFAIRDVSKSIISLLEESSVTAEEIDYFLLHQANRRILDKMARKIGCPRDKFLENMMTYGNTSAASIPILLSESVEKGLILLDGSQKVLLSGFGGGLTWGSLIVKI.

The active site involves C112. Residues 181 to 202 (TDGSRGQNLTSGNNPLRSPFSD) are disordered. Positions 184–196 (SRGQNLTSGNNPL) are enriched in polar residues. The active site involves H249. The tract at residues 250-254 (QANRR) is ACP-binding. N279 is an active-site residue.

This sequence belongs to the thiolase-like superfamily. FabH family. As to quaternary structure, homodimer.

The protein resides in the cytoplasm. It carries out the reaction malonyl-[ACP] + acetyl-CoA + H(+) = 3-oxobutanoyl-[ACP] + CO2 + CoA. The protein operates within lipid metabolism; fatty acid biosynthesis. In terms of biological role, catalyzes the condensation reaction of fatty acid synthesis by the addition to an acyl acceptor of two carbons from malonyl-ACP. Catalyzes the first condensation reaction which initiates fatty acid synthesis and may therefore play a role in governing the total rate of fatty acid production. Possesses both acetoacetyl-ACP synthase and acetyl transacylase activities. Its substrate specificity determines the biosynthesis of branched-chain and/or straight-chain of fatty acids. The chain is Beta-ketoacyl-[acyl-carrier-protein] synthase III from Streptococcus uberis (strain ATCC BAA-854 / 0140J).